The following is a 491-amino-acid chain: mRNA cleavage and polyadenylation factor clp1 (491 aa).

The ATP site is built by glutamate 28 and lysine 78. The tract at residues 128 to 160 (RAAAAQAQQQHPTHHQQQQQGRGAGAGVARSKP) is disordered. The span at 130–148 (AAAQAQQQHPTHHQQQQQG) shows a compositional bias: low complexity. 171–176 (GVGKTS) is a binding site for ATP.

Belongs to the Clp1 family. Clp1 subfamily. Component of a pre-mRNA cleavage factor complex. Interacts directly with PCF11.

It localises to the nucleus. Its function is as follows. Required for endonucleolytic cleavage during polyadenylation-dependent pre-mRNA 3'-end formation. The chain is mRNA cleavage and polyadenylation factor clp1 (paa-7) from Neurospora crassa (strain ATCC 24698 / 74-OR23-1A / CBS 708.71 / DSM 1257 / FGSC 987).